The sequence spans 393 residues: MDPKRSQKETVLITGGGGYFGFRLGCALNQKGVHVILFDISSPAETIPEGIKFIQGDICHLSDIEKAFQDADITCVFHIASYGMSGREQLNRNLIEEVNIGGTDNILQACQRRRVPRLVYTSTFNVIFGGQVIRNGDESLPYLPLHLHPDHYSRTKSIAEKKVLEANGTPLDRGDGVLRTCALRPAGIYGPGEQRHLPRIVSYIEKGLFKFVYGDPRSLVEFVHVDNLVQAHILASEALRADKGHIASGQPYFISDGRPVNNFEFFRPLVEGLGYTFPSTRLPLTLVYCFAFLTEMVHFILGRLYNFQPFLTRTEVYKTGVTHYFSLEKAKKELGYKAQPFDLQEAVEWFKAHGHGRSSGSRDSECFIWDGLLVFLLIIAVLIWLPSSVILSL.

Catalysis depends on Tyr-152, which acts as the Proton acceptor. Lys-156 lines the NAD(+) pocket. The next 2 membrane-spanning stretches (helical) occupy residues 282–302 (LPLTLVYCFAFLTEMVHFILG) and 371–391 (GLLVFLLIIAVLIWLPSSVIL).

The protein belongs to the 3-beta-HSD family.

It is found in the membrane. This chain is Short-chain dehydrogenase/reductase family 42E member 1 (SDR42E1), found in Macaca fascicularis (Crab-eating macaque).